The chain runs to 166 residues: Endoribonuclease YbeY (166 aa).

Positions 131, 135, and 141 each coordinate Zn(2+).

The protein belongs to the endoribonuclease YbeY family. It depends on Zn(2+) as a cofactor.

It localises to the cytoplasm. Functionally, single strand-specific metallo-endoribonuclease involved in late-stage 70S ribosome quality control and in maturation of the 3' terminus of the 16S rRNA. In Dehalococcoides mccartyi (strain CBDB1), this protein is Endoribonuclease YbeY.